A 789-amino-acid chain; its full sequence is Aconitate hydratase, mitochondrial (789 aa).

The N-terminal 32 residues, 1–32 (MFCKISRAPARMGSRIFTQSTLRSFSCAPVAA), are a transit peptide targeting the mitochondrion. Substrate is bound by residues Gln-106 and 199 to 201 (DSH). [4Fe-4S] cluster contacts are provided by Cys-392, Cys-455, and Cys-458. Substrate-binding positions include Arg-481, Arg-486, Arg-613, and 676-677 (SR).

The protein belongs to the aconitase/IPM isomerase family. As to quaternary structure, monomer. It depends on [4Fe-4S] cluster as a cofactor.

The protein resides in the mitochondrion. The catalysed reaction is citrate = D-threo-isocitrate. It participates in carbohydrate metabolism; tricarboxylic acid cycle; isocitrate from oxaloacetate: step 2/2. Functionally, catalyzes the isomerization of citrate to isocitrate via cis-aconitate, a step in the citric acid cycle. This chain is Aconitate hydratase, mitochondrial, found in Schizosaccharomyces pombe (strain 972 / ATCC 24843) (Fission yeast).